We begin with the raw amino-acid sequence, 180 residues long: Major urinary protein 2 (180 aa).

An N-terminal signal peptide occupies residues Met-1–Ala-18. Cys-82 and Cys-175 are oxidised to a cystine.

The protein belongs to the calycin superfamily. Lipocalin family. Abundant in the urine of adult male mice but absent from that of females.

The protein localises to the secreted. Binds pheromones that are released from drying urine of males. These pheromones affect the sexual behavior of females. This is Major urinary protein 2 (Mup2) from Mus musculus (Mouse).